The sequence spans 152 residues: uncharacterized protein (152 aa).

This sequence belongs to the antirestriction protein family.

This is an uncharacterized protein from Escherichia coli (strain K12).